A 71-amino-acid chain; its full sequence is Permeability factor 2 (71 aa).

2 disulfides stabilise this stretch: Cys7–Cys33 and Cys9–Cys49.

It belongs to the intercrine alpha (chemokine CxC) family. As to quaternary structure, homodimer.

It localises to the secreted. Functionally, has chemotactic activity for neutrophils. In Oryctolagus cuniculus (Rabbit), this protein is Permeability factor 2.